A 372-amino-acid polypeptide reads, in one-letter code: DNA damage-repair/toleration protein DRT100 (372 aa).

A signal peptide spans 1-26 (MRKLLASPFSSLLAVVFISVISVVRC). 9 LRR repeats span residues 136 to 158 (SLRI…IGKL), 160 to 183 (KLAV…TSLI), 184 to 205 (ELKH…DFGS), 208 to 230 (MLSR…ISGM), 232 to 254 (RLAD…MGNM), 256 to 277 (VLSL…SLLS), 280 to 302 (GLDV…FGSK), 304 to 326 (YLVS…LSSA), and 328 to 350 (FVGH…FPFD).

Its function is as follows. This protein is able to complement bacterial recA mutations, but its native function in the plant is not known. In Arabidopsis thaliana (Mouse-ear cress), this protein is DNA damage-repair/toleration protein DRT100 (DRT100).